Reading from the N-terminus, the 158-residue chain is MPSKNSINRPKLTVNLNKKSQRLGQKRADRERKGLLQPERSSEASKSGEIKSVPLDLYFNGKESNNNSSITTKTLSKKRAKKIERNLKYAQQRKLLVDVQAKEDIDMNVESNKTKGNGKEKTPLTKMKDALWNVIEDTSSQGLTLKTGQGTTLGGPTF.

Residues 1–18 are compositionally biased toward polar residues; the sequence is MPSKNSINRPKLTVNLNK. The interval 1-51 is disordered; that stretch reads MPSKNSINRPKLTVNLNKKSQRLGQKRADRERKGLLQPERSSEASKSGEIK. Over residues 26–49 the composition is skewed to basic and acidic residues; the sequence is KRADRERKGLLQPERSSEASKSGE.

The protein belongs to the ALB1 family. Component of the nucleoplasmic and cytoplasmic pre-60S ribosomal particles.

Its subcellular location is the cytoplasm. It localises to the nucleus. Functionally, involved in proper assembly of pre-ribosomal particles during the biogenesis of the 60S ribosomal subunit. Accompanies the pre-60S particles to the cytoplasm. This chain is Ribosome biogenesis protein ALB1 (ALB1), found in Vanderwaltozyma polyspora (strain ATCC 22028 / DSM 70294 / BCRC 21397 / CBS 2163 / NBRC 10782 / NRRL Y-8283 / UCD 57-17) (Kluyveromyces polysporus).